We begin with the raw amino-acid sequence, 449 residues long: MSHIKFDYSKVLDKFVAPHEVEYMQSQVTAADELIRKGTGAGSDFLGWLDLPEKYDREEFDRILKAAEQIKSDSDVLVVIGIGGSYLGAKAAIDFLNHHFANLQTKEERKAPQILYAGNSISSTYLADLVEYVADKDFSVNVISKSGTTTEPAIAFRVFKELLVKKYGQEEANKRIYATTDRQKGAVKVEADANGWGTFVVPDDIGGRFSVLTAVGLLPIAASGADIKALMEGANAARKDYTSDKISENEAYQYAAVRNILYRKGYATEILVNYEPSLQYFSEWWKQLAGESEGKDQKGIYPTSANFSTDLHSLGQFIQEGTRIMFETVVRVDKPRKNVLIPTLEEDLDGLGYLQGKDVDFVNKKATDGVLLAHTDGDVPNMYVTLPEQDAFTLGYTIYFFELAIALSGYLNAINPFDQPGVEAYKRNMFALLGKPGFEELSKELNARL.

Catalysis depends on glutamate 291, which acts as the Proton donor. Catalysis depends on residues histidine 312 and lysine 426.

The protein belongs to the GPI family.

It localises to the cytoplasm. It carries out the reaction alpha-D-glucose 6-phosphate = beta-D-fructose 6-phosphate. Its pathway is carbohydrate biosynthesis; gluconeogenesis. The protein operates within carbohydrate degradation; glycolysis; D-glyceraldehyde 3-phosphate and glycerone phosphate from D-glucose: step 2/4. In terms of biological role, catalyzes the reversible isomerization of glucose-6-phosphate to fructose-6-phosphate. This chain is Glucose-6-phosphate isomerase, found in Streptococcus pneumoniae (strain ATCC BAA-255 / R6).